A 206-amino-acid chain; its full sequence is Protein GrpE (206 aa).

The span at M1 to V17 shows a compositional bias: basic and acidic residues. A disordered region spans residues M1–E20.

This sequence belongs to the GrpE family. As to quaternary structure, homodimer.

It is found in the cytoplasm. Functionally, participates actively in the response to hyperosmotic and heat shock by preventing the aggregation of stress-denatured proteins, in association with DnaK and GrpE. It is the nucleotide exchange factor for DnaK and may function as a thermosensor. Unfolded proteins bind initially to DnaJ; upon interaction with the DnaJ-bound protein, DnaK hydrolyzes its bound ATP, resulting in the formation of a stable complex. GrpE releases ADP from DnaK; ATP binding to DnaK triggers the release of the substrate protein, thus completing the reaction cycle. Several rounds of ATP-dependent interactions between DnaJ, DnaK and GrpE are required for fully efficient folding. The sequence is that of Protein GrpE from Shewanella oneidensis (strain ATCC 700550 / JCM 31522 / CIP 106686 / LMG 19005 / NCIMB 14063 / MR-1).